Consider the following 174-residue polypeptide: Shikimate kinase (174 aa).

Residue 14–19 (GAGKST) coordinates ATP. Serine 18 is a Mg(2+) binding site. Substrate is bound by residues aspartate 36, arginine 60, and glycine 82. Arginine 120 is a binding site for ATP. Arginine 141 is a binding site for substrate. Arginine 158 contacts ATP.

This sequence belongs to the shikimate kinase family. As to quaternary structure, monomer. Requires Mg(2+) as cofactor.

It localises to the cytoplasm. It carries out the reaction shikimate + ATP = 3-phosphoshikimate + ADP + H(+). It functions in the pathway metabolic intermediate biosynthesis; chorismate biosynthesis; chorismate from D-erythrose 4-phosphate and phosphoenolpyruvate: step 5/7. In terms of biological role, catalyzes the specific phosphorylation of the 3-hydroxyl group of shikimic acid using ATP as a cosubstrate. The chain is Shikimate kinase from Buchnera aphidicola subsp. Baizongia pistaciae (strain Bp).